Consider the following 125-residue polypeptide: Large ribosomal subunit protein bL12 (125 aa).

It belongs to the bacterial ribosomal protein bL12 family. As to quaternary structure, homodimer. Part of the ribosomal stalk of the 50S ribosomal subunit. Forms a multimeric L10(L12)X complex, where L10 forms an elongated spine to which 2 to 4 L12 dimers bind in a sequential fashion. Binds GTP-bound translation factors.

In terms of biological role, forms part of the ribosomal stalk which helps the ribosome interact with GTP-bound translation factors. Is thus essential for accurate translation. The polypeptide is Large ribosomal subunit protein bL12 (Cereibacter sphaeroides (strain ATCC 17023 / DSM 158 / JCM 6121 / CCUG 31486 / LMG 2827 / NBRC 12203 / NCIMB 8253 / ATH 2.4.1.) (Rhodobacter sphaeroides)).